Reading from the N-terminus, the 210-residue chain is Glutathione S-transferase-like protein FUS3 (210 aa).

Positions 1 to 74 constitute a GST N-terminal domain; sequence MPNARVFKIL…YVAQSGPQAS (74 aa). In terms of domain architecture, GST C-terminal spans 80–206; that stretch reads DAMSSAKIRQ…GKPNFIEKRR (127 aa).

Belongs to the GST superfamily.

Functionally, glutathione S-transferase-like protein; part of the gene cluster that mediates the biosynthesis of the mycotoxin fusarin C. Within the cluster, FUS1, FUS2, FUS8 and FUS9 are sufficient for fusarin production. The other FUS cluster members are not essential for fusarin C biosynthesis. The sequence is that of Glutathione S-transferase-like protein FUS3 from Gibberella fujikuroi (strain CBS 195.34 / IMI 58289 / NRRL A-6831) (Bakanae and foot rot disease fungus).